The following is a 101-amino-acid chain: Small ribosomal subunit protein uS14c (101 aa).

Belongs to the universal ribosomal protein uS14 family. In terms of assembly, part of the 30S ribosomal subunit.

The protein resides in the plastid. In terms of biological role, binds 16S rRNA, required for the assembly of 30S particles. The sequence is that of Small ribosomal subunit protein uS14c from Helicosporidium sp. subsp. Simulium jonesii (Green alga).